The chain runs to 163 residues: Transcription elongation factor GreB (163 aa).

The stretch at 54 to 76 (GKRRMREIDRRIRFLTKRLEAAV) forms a coiled coil.

The protein belongs to the GreA/GreB family. GreB subfamily.

Necessary for efficient RNA polymerase transcription elongation past template-encoded arresting sites. The arresting sites in DNA have the property of trapping a certain fraction of elongating RNA polymerases that pass through, resulting in locked ternary complexes. Cleavage of the nascent transcript by cleavage factors such as GreA or GreB allows the resumption of elongation from the new 3'terminus. GreB releases sequences of up to 9 nucleotides in length. This Neisseria meningitidis serogroup A / serotype 4A (strain DSM 15465 / Z2491) protein is Transcription elongation factor GreB.